The primary structure comprises 525 residues: Adenosine deaminase AGSA (525 aa).

The N-terminal stretch at 1-25 is a signal peptide; the sequence is MSSFSTHNFVAIATFVCWFCCLATA. N-linked (GlcNAc...) asparagine glycosylation is present at asparagine 81. 2 residues coordinate Zn(2+): histidine 117 and histidine 119. Aspartate 120 lines the substrate pocket. A glycan (N-linked (GlcNAc...) asparagine) is linked at asparagine 132. Cysteine 142 and cysteine 163 form a disulfide bridge. An N-linked (GlcNAc...) asparagine glycan is attached at asparagine 188. Residues 207 to 214 and glycine 329 contribute to the substrate site; that span reads WVRFNKYF. Asparagine 334 is a glycosylation site (N-linked (GlcNAc...) asparagine). Residue histidine 361 coordinates Zn(2+). Glutamate 364 acts as the Proton donor in catalysis. Histidine 389 serves as the catalytic Proton acceptor. Aspartate 446 contributes to the Zn(2+) binding site. Aspartate 447 contacts substrate.

Belongs to the metallo-dependent hydrolases superfamily. Adenosine and AMP deaminases family. ADGF subfamily. Zn(2+) serves as cofactor. As to expression, detected in egg cordons and in the developing central nervous system. Not detected in adult central nervous system (at protein level). Atrial gland.

The protein localises to the secreted. The enzyme catalyses adenosine + H2O + H(+) = inosine + NH4(+). Adenosine deaminase that may contribute to the degradation of extracellular adenosine, a signaling molecule that controls a variety of cellular responses. May play a role in the regulation of cell proliferation. The chain is Adenosine deaminase AGSA from Aplysia californica (California sea hare).